The sequence spans 146 residues: NADPH-dependent 7-cyano-7-deazaguanine reductase (146 aa).

The active-site Thioimide intermediate is Cys48. The Proton donor role is filled by Asp55. Substrate-binding positions include 70–72 (VES) and 89–90 (HE).

Belongs to the GTP cyclohydrolase I family. QueF type 1 subfamily.

It localises to the cytoplasm. The catalysed reaction is 7-aminomethyl-7-carbaguanine + 2 NADP(+) = 7-cyano-7-deazaguanine + 2 NADPH + 3 H(+). The protein operates within tRNA modification; tRNA-queuosine biosynthesis. In terms of biological role, catalyzes the NADPH-dependent reduction of 7-cyano-7-deazaguanine (preQ0) to 7-aminomethyl-7-deazaguanine (preQ1). This chain is NADPH-dependent 7-cyano-7-deazaguanine reductase, found in Helicobacter pylori (strain Shi470).